Consider the following 243-residue polypeptide: 7-cyano-7-deazaguanine synthase (243 aa).

18–28 (FSGGQDSATCL) serves as a coordination point for ATP. 4 residues coordinate Zn(2+): cysteine 206, cysteine 221, cysteine 224, and cysteine 227.

Belongs to the QueC family. Zn(2+) is required as a cofactor.

The enzyme catalyses 7-carboxy-7-deazaguanine + NH4(+) + ATP = 7-cyano-7-deazaguanine + ADP + phosphate + H2O + H(+). Its pathway is purine metabolism; 7-cyano-7-deazaguanine biosynthesis. Catalyzes the ATP-dependent conversion of 7-carboxy-7-deazaguanine (CDG) to 7-cyano-7-deazaguanine (preQ(0)). This chain is 7-cyano-7-deazaguanine synthase, found in Methylorubrum extorquens (strain PA1) (Methylobacterium extorquens).